A 299-amino-acid chain; its full sequence is Bifunctional protein FolD (299 aa).

NADP(+) is bound by residues 169–171, S194, and I235; that span reads GRS.

It belongs to the tetrahydrofolate dehydrogenase/cyclohydrolase family. Homodimer.

The catalysed reaction is (6R)-5,10-methylene-5,6,7,8-tetrahydrofolate + NADP(+) = (6R)-5,10-methenyltetrahydrofolate + NADPH. The enzyme catalyses (6R)-5,10-methenyltetrahydrofolate + H2O = (6R)-10-formyltetrahydrofolate + H(+). Its pathway is one-carbon metabolism; tetrahydrofolate interconversion. Catalyzes the oxidation of 5,10-methylenetetrahydrofolate to 5,10-methenyltetrahydrofolate and then the hydrolysis of 5,10-methenyltetrahydrofolate to 10-formyltetrahydrofolate. The sequence is that of Bifunctional protein FolD from Nostoc sp. (strain PCC 7120 / SAG 25.82 / UTEX 2576).